The chain runs to 37 residues: Large ribosomal subunit protein bL36 (37 aa).

The protein belongs to the bacterial ribosomal protein bL36 family.

This is Large ribosomal subunit protein bL36 from Koribacter versatilis (strain Ellin345).